Here is a 278-residue protein sequence, read N- to C-terminus: Large ribosomal subunit protein uL2 (278 aa).

3 disordered regions span residues 1–20 (MAIRKYKPTTPGRRGSSVSD), 25–57 (TRSTPEKSLLRPLTKSGGRNAHGRITTRHRGGG), and 224–278 (VVMN…GKKR). 2 stretches are compositionally biased toward basic residues: residues 45-57 (AHGRITTRHRGGG) and 269-278 (VRRRKTGKKR).

It belongs to the universal ribosomal protein uL2 family. As to quaternary structure, part of the 50S ribosomal subunit. Forms a bridge to the 30S subunit in the 70S ribosome.

One of the primary rRNA binding proteins. Required for association of the 30S and 50S subunits to form the 70S ribosome, for tRNA binding and peptide bond formation. It has been suggested to have peptidyltransferase activity; this is somewhat controversial. Makes several contacts with the 16S rRNA in the 70S ribosome. The protein is Large ribosomal subunit protein uL2 of Nocardia farcinica (strain IFM 10152).